We begin with the raw amino-acid sequence, 1004 residues long: NADH:acrylate oxidoreductase (1004 aa).

The residue at position 455 (Thr455) is an FMN phosphoryl threonine. Residues Ala508, Glu527, Asn535, Thr536, Gly540, Gly541, and Asp775 each contribute to the FAD site. Arg834 acts as the Proton donor in catalysis. 4 residues coordinate FAD: His941, Glu970, Ala985, and Leu986.

This sequence belongs to the FAD-dependent oxidoreductase 2 family. FRD/SDH subfamily. FAD is required as a cofactor. It depends on FMN as a cofactor. Is flavinylated on Thr-455 by ApbE, encoded in a neighboring gene. Flavinylation is essential for catalytic activity.

It carries out the reaction acrylate + NADH + H(+) = propanoate + NAD(+). Functionally, catalyzes the NADH-dependent reduction of acrylate to propanoate. The principal role of ARD in Vibrio seems to be the energy-saving detoxification of acrylate coming from the environment. May also use acrylate as the terminal electron acceptor for NADH regeneration at oxygen deficiency. NADPH cannot replace NADH as the electron donor. Is also able to reduce methacrylate in vitro, but with a much lower efficiency. In Vibrio harveyi (Beneckea harveyi), this protein is NADH:acrylate oxidoreductase.